Reading from the N-terminus, the 425-residue chain is UDP-N-acetylglucosamine 1-carboxyvinyltransferase (425 aa).

25 to 26 is a binding site for phosphoenolpyruvate; it reads KN. R95 provides a ligand contact to UDP-N-acetyl-alpha-D-glucosamine. C119 serves as the catalytic Proton donor. 2-(S-cysteinyl)pyruvic acid O-phosphothioketal is present on C119. UDP-N-acetyl-alpha-D-glucosamine contacts are provided by residues 124–128, D306, and I328; that span reads RPVDQ.

Belongs to the EPSP synthase family. MurA subfamily.

The protein localises to the cytoplasm. It catalyses the reaction phosphoenolpyruvate + UDP-N-acetyl-alpha-D-glucosamine = UDP-N-acetyl-3-O-(1-carboxyvinyl)-alpha-D-glucosamine + phosphate. It functions in the pathway cell wall biogenesis; peptidoglycan biosynthesis. In terms of biological role, cell wall formation. Adds enolpyruvyl to UDP-N-acetylglucosamine. The polypeptide is UDP-N-acetylglucosamine 1-carboxyvinyltransferase (Thermus thermophilus (strain ATCC 27634 / DSM 579 / HB8)).